Reading from the N-terminus, the 123-residue chain is NADH-quinone oxidoreductase subunit A (123 aa).

Transmembrane regions (helical) follow at residues 11–31, 68–88, and 93–113; these read YLPIAIFFGIAVLLSVLIMIL, LVAILFIIFDLEIAFLVPWAI, and IGKMGFFSMMFFLFVLIIGFI.

Belongs to the complex I subunit 3 family. NDH-1 is composed of 14 different subunits. Subunits NuoA, H, J, K, L, M, N constitute the membrane sector of the complex.

The protein resides in the cell inner membrane. It catalyses the reaction a quinone + NADH + 5 H(+)(in) = a quinol + NAD(+) + 4 H(+)(out). Functionally, NDH-1 shuttles electrons from NADH, via FMN and iron-sulfur (Fe-S) centers, to quinones in the respiratory chain. The immediate electron acceptor for the enzyme in this species is believed to be ubiquinone. Couples the redox reaction to proton translocation (for every two electrons transferred, four hydrogen ions are translocated across the cytoplasmic membrane), and thus conserves the redox energy in a proton gradient. This Rickettsia prowazekii (strain Madrid E) protein is NADH-quinone oxidoreductase subunit A.